The following is a 466-amino-acid chain: NADH-quinone oxidoreductase subunit N (466 aa).

The next 14 membrane-spanning stretches (helical) occupy residues 9–29 (LIPL…GAIV), 33–53 (CGTV…MLAP), 68–88 (PFTR…LLLA), 100–120 (EEYP…ASAA), 122–142 (FLTL…LVAY), 157–177 (LLMG…LYGA), 190–210 (SAAG…GLAF), 232–252 (VVAF…LLIL), 263–283 (APLW…ALLQ), 289–309 (MLAY…LSGG), 314–334 (AAAF…GALA), 359–379 (GVVL…VGFV), 394–416 (APLA…RVVV), and 438–458 (LSLG…GPLF).

This sequence belongs to the complex I subunit 2 family. NDH-1 is composed of 14 different subunits. Subunits NuoA, H, J, K, L, M, N constitute the membrane sector of the complex.

It localises to the cell inner membrane. The catalysed reaction is a quinone + NADH + 5 H(+)(in) = a quinol + NAD(+) + 4 H(+)(out). NDH-1 shuttles electrons from NADH, via FMN and iron-sulfur (Fe-S) centers, to quinones in the respiratory chain. The immediate electron acceptor for the enzyme in this species is believed to be ubiquinone. Couples the redox reaction to proton translocation (for every two electrons transferred, four hydrogen ions are translocated across the cytoplasmic membrane), and thus conserves the redox energy in a proton gradient. In Geobacter metallireducens (strain ATCC 53774 / DSM 7210 / GS-15), this protein is NADH-quinone oxidoreductase subunit N.